Reading from the N-terminus, the 197-residue chain is Small ribosomal subunit protein uS4B (197 aa).

One can recognise an S4 RNA-binding domain in the interval 88 to 153; that stretch reads CRLDNMVYRM…IEKYLSNLKN (66 aa).

It belongs to the universal ribosomal protein uS4 family. Part of the 30S ribosomal subunit. Contacts protein S5. The interaction surface between S4 and S5 is involved in control of translational fidelity.

In terms of biological role, one of the primary rRNA binding proteins, it binds directly to 16S rRNA where it nucleates assembly of the body of the 30S subunit. Its function is as follows. With S5 and S12 plays an important role in translational accuracy. The sequence is that of Small ribosomal subunit protein uS4B from Alkaliphilus oremlandii (strain OhILAs) (Clostridium oremlandii (strain OhILAs)).